Consider the following 122-residue polypeptide: Large ribosomal subunit protein uL18 (122 aa).

The span at 1–21 shows a compositional bias: basic residues; that stretch reads MSKLSRKQQTQKRHRRLRRHI. Positions 1–25 are disordered; sequence MSKLSRKQQTQKRHRRLRRHITGTS.

It belongs to the universal ribosomal protein uL18 family. Part of the 50S ribosomal subunit; part of the 5S rRNA/L5/L18/L25 subcomplex. Contacts the 5S and 23S rRNAs.

This is one of the proteins that bind and probably mediate the attachment of the 5S RNA into the large ribosomal subunit, where it forms part of the central protuberance. The sequence is that of Large ribosomal subunit protein uL18 from Synechococcus sp. (strain CC9902).